The sequence spans 93 residues: Small ribosomal subunit protein uS19 (93 aa).

Belongs to the universal ribosomal protein uS19 family.

In terms of biological role, protein S19 forms a complex with S13 that binds strongly to the 16S ribosomal RNA. This is Small ribosomal subunit protein uS19 from Rhodococcus erythropolis (strain PR4 / NBRC 100887).